Reading from the N-terminus, the 303-residue chain is Coenzyme PQQ synthesis protein B (303 aa).

The protein belongs to the PqqB family.

Its pathway is cofactor biosynthesis; pyrroloquinoline quinone biosynthesis. In terms of biological role, may be involved in the transport of PQQ or its precursor to the periplasm. The sequence is that of Coenzyme PQQ synthesis protein B from Pseudomonas putida (strain GB-1).